The following is a 41-amino-acid chain: Large ribosomal subunit protein bL36 (41 aa).

It belongs to the bacterial ribosomal protein bL36 family.

The polypeptide is Large ribosomal subunit protein bL36 (Bartonella tribocorum (strain CIP 105476 / IBS 506)).